The following is a 330-amino-acid chain: Thiosulfate transporter TsuA (330 aa).

Topologically, residues Met1–Ile2 are periplasmic. Residues Trp3–Arg18 form a helical membrane-spanning segment. Topologically, residues Gly19–Asn36 are cytoplasmic. A helical membrane pass occupies residues Tyr37–Val59. The Periplasmic portion of the chain corresponds to Gly60–Asn70. Residues Leu71 to Leu87 traverse the membrane as a helical segment. The Cytoplasmic portion of the chain corresponds to Ala88–Gly102. Residues Leu103–Lys121 form a helical membrane-spanning segment. The Periplasmic segment spans residues Ser122–Asn162. A helical membrane pass occupies residues Pro163–Gly180. At Thr181–Lys189 the chain is on the cytoplasmic side. A helical membrane pass occupies residues Phe190–Thr211. Residues Leu212–Asn239 lie on the Periplasmic side of the membrane. The chain crosses the membrane as a helical span at residues Trp240–Val258. Residues Ala259–Asn269 lie on the Cytoplasmic side of the membrane. The helical transmembrane segment at Pro270 to Thr289 threads the bilayer. Topologically, residues Ala290–Ala306 are periplasmic. Residues Leu307 to Ile326 form a helical membrane-spanning segment. At Leu327–Arg330 the chain is on the cytoplasmic side.

Belongs to the TsuA/YedE (TC 9.B.102) family.

The protein localises to the cell inner membrane. It catalyses the reaction thiosulfate(in) = thiosulfate(out). Its function is as follows. Mediates thiosulfate uptake. This chain is Thiosulfate transporter TsuA, found in Spirochaeta thermophila (strain ATCC 700085 / DSM 6578 / Z-1203).